The following is a 490-amino-acid chain: Sphingomyelinase (490 aa).

Positions 1–31 (MDYAKRIGQVGALAVVLGVGAAVTTHAIGSA) are cleaved as a signal peptide. Positions 30-49 (SAAPTDPSSSSTDSPVDACS) are disordered. Residues 32–136 (APTDPSSSST…FDACDPDGNR (105 aa)) are Periplasmic-facing. A beta stranded transmembrane segment spans residues 137–145 (MTFAVRERG). The Extracellular segment spans residues 146–161 (APGGPQHGIVTVDQRT). Residues 162 to 168 (ASFIYTA) traverse the membrane as a beta stranded segment. Residues 169–171 (DPG) lie on the Periplasmic side of the membrane. The beta stranded transmembrane segment at 172–182 (FVGTDTFSVNV) threads the bilayer. Residues 183–187 (SDDTS) are Extracellular-facing. A beta stranded membrane pass occupies residues 188–196 (LHVHGLAGY). The Periplasmic segment spans residues 197–204 (LGPFHGHD). A beta stranded transmembrane segment spans residues 205–213 (DVATVTVFV). Residues 214 to 490 (GNTPTDTISG…HYVADNVAVR (277 aa)) are Extracellular-facing.

This sequence belongs to the SpmT family.

The protein localises to the cell outer membrane. The catalysed reaction is a sphingomyelin + H2O = phosphocholine + an N-acylsphing-4-enine + H(+). In terms of biological role, catalyzes the cleavage of sphingomyelin, a major lipid in eukaryotic cells, into ceramide and phosphocholine, which are then utilized by M.bovis as carbon, nitrogen and phosphorus sources, respectively. Thus, enables M.bovis to utilize sphingomyelin as a source of several essential nutrients for intracellular growth during infection. Furthermore, lyses erythrocytes and constitutes a hemolytic factor. The chain is Sphingomyelinase from Mycobacterium bovis (strain ATCC BAA-935 / AF2122/97).